Reading from the N-terminus, the 174-residue chain is Protein-export protein SecB (174 aa).

Belongs to the SecB family. In terms of assembly, homotetramer, a dimer of dimers. One homotetramer interacts with 1 SecA dimer.

The protein localises to the cytoplasm. Functionally, one of the proteins required for the normal export of preproteins out of the cell cytoplasm. It is a molecular chaperone that binds to a subset of precursor proteins, maintaining them in a translocation-competent state. It also specifically binds to its receptor SecA. The polypeptide is Protein-export protein SecB (Ehrlichia ruminantium (strain Gardel)).